A 241-amino-acid polypeptide reads, in one-letter code: Small ribosomal subunit protein uS2 (241 aa).

Belongs to the universal ribosomal protein uS2 family.

In Yersinia pestis bv. Antiqua (strain Antiqua), this protein is Small ribosomal subunit protein uS2.